The following is a 360-amino-acid chain: sn-glycerol-3-phosphate import ATP-binding protein UgpC (360 aa).

The 232-residue stretch at 4–235 (LSLKGVRKSY…PATTFVASFI (232 aa)) folds into the ABC transporter domain. Position 37-44 (37-44 (GPSGCGKS)) interacts with ATP.

The protein belongs to the ABC transporter superfamily. sn-glycerol-3-phosphate importer (TC 3.A.1.1.3) family. The complex is composed of two ATP-binding proteins (UgpC), two transmembrane proteins (UgpA and UgpE) and a solute-binding protein (UgpB).

Its subcellular location is the cell inner membrane. The catalysed reaction is sn-glycerol 3-phosphate(out) + ATP + H2O = sn-glycerol 3-phosphate(in) + ADP + phosphate + H(+). Its function is as follows. Part of the ABC transporter complex UgpBAEC involved in sn-glycerol-3-phosphate (G3P) import. Responsible for energy coupling to the transport system. The sequence is that of sn-glycerol-3-phosphate import ATP-binding protein UgpC from Burkholderia pseudomallei (strain 1710b).